Here is an 822-residue protein sequence, read N- to C-terminus: Protein smoothened (822 aa).

Positions 1 to 28 (MSSKRPCSIVGSFWMLWIWTATSMVARA) are cleaved as a signal peptide. Over 29–212 (VILHPNETIF…EDEHSDMHSY (184 aa)) the chain is Extracellular. N-linked (GlcNAc...) asparagine glycosylation occurs at N34. 5 disulfides stabilise this stretch: C42–C157, C48–C112, C56–C105, C96–C132, and C125–C147. One can recognise an FZ domain in the interval 43 to 160 (KKSTTCEVLK…EQFPKGCQNE (118 aa)). D73 contacts cholesterol. N-linked (GlcNAc...) asparagine glycosylation is present at N167. Disulfide bonds link C172-C192, C196-C274, and C293-C369. The chain crosses the membrane as a helical span at residues 213-233 (IAVFGTITLLCTFFTLATFLA). Residues 234-241 (DWKNSNRY) lie on the Cytoplasmic side of the membrane. The helical transmembrane segment at 242-262 (PAVILFYVNACFFIGSIGWLA) threads the bilayer. The Extracellular portion of the chain corresponds to 263–293 (QFMDGARNEIVCKSDNTMRLGEPSSTETLSC). Residues 294–314 (VIIFVIVYYSLMSGVIWFVML) traverse the membrane as a helical segment. The Cytoplasmic segment spans residues 315–335 (TYAWHTSFKALGTTHQPLSGK). The helical transmembrane segment at 336–356 (TSYFHLVTWSIPFILTVAILA) threads the bilayer. Topologically, residues 357–381 (NSQVDADSVSGICFVGYRYYEYRAG) are extracellular. Position 373 (Y373) interacts with cholesterol. A helical transmembrane segment spans residues 382–402 (FVLAPIGFVLVIGGYFLIRGV). The Cytoplasmic portion of the chain corresponds to 403–430 (MTLFSIKSNHPGLLSEKAASKINETMLR). A helical transmembrane segment spans residues 431-451 (LGIFGFLAFGFVLITFGCHFY). Over 452–503 (DFFNQAEWERSFREYVLCEANVTIAHQTNKPIPECAIKNRPSLLVGKINLFS) the chain is Extracellular. A disulfide bond links C469 and C486. Residue N472 is glycosylated (N-linked (GlcNAc...) asparagine). A helical membrane pass occupies residues 504-524 (MFGTGIAMSTWVWTKATILIW). The Cytoplasmic portion of the chain corresponds to 525–822 (KRTWFRIIGR…AELLDADSDF (298 aa)). Residues 645-687 (MMKRKKKKKKRRKEVRPAGPAADEGNPAYHRREFGPSAVPRLP) are disordered. Residues 647–658 (KRKKKKKKRRKE) show a composition bias toward basic residues.

Belongs to the G-protein coupled receptor Fz/Smo family. In terms of assembly, monomer.

The protein localises to the cell membrane. The protein resides in the cell projection. It localises to the cilium. Functionally, g protein-coupled receptor which associates with the patched protein (ptch) to transduce Hedgehog protein signaling. Binding of sonic hedgehog (shh) to its receptor patched prevents inhibition of smoothened (smo) by patched. When active, smo binds to and sequesters protein kinase A catalytic subunit prkaca at the cell membrane, preventing prkaca-mediated phosphorylation of gli transcription factors which releases the gli proteins from prkaca-mediated inhibition and allows for transcriptional activation of Hedgehog signaling pathway target genes. Required for the development of primary and secondary motoneurons but not for the specification of midbrain dopaminergic neurons or development of the medial floor plate. Required for induction of lateral floor plate and posterior motoneurons, anterior neural plate patterning, dorsoventral forebrain patterning, dorsoventral retinal patterning, optic stalk development, and formation of the forebrain primary axonal scaffold. Required to regulate the formation of a subset of cerebellar neurons by limiting wnt1 expression which controls cerebellar expression of transcription factor olig2. Required for development of the pancreas. Required for muscle development. Required for the formation of a single continuous intestinal lumen from multiple discontinuous lumens, probably by regulating remodeling through rab11a-mediated trafficking to facilitate lumen fusion. Required for development of the adenohypophysis. Required for anteroposterior patterning of the otic vesicle. Required for development of the anterior craniofacial skeleton. Required for patterning of the caudal fin. Required during gastrulation and early somitogenesis stages to promote cardiomyocyte formation by regulating the specification of myocardial progenitors. Required for induction of arterial endothelial cell formation by repressing venous cell fate. In Danio rerio (Zebrafish), this protein is Protein smoothened.